Consider the following 582-residue polypeptide: ATP-dependent lipid A-core flippase (582 aa).

A run of 6 helical transmembrane segments spans residues 27 to 48 (LVVS…ISLL), 63 to 85 (FLRI…GFAS), 144 to 168 (VSIV…WQLS), 170 to 188 (VLIV…VSKR), 244 to 266 (LVSA…LFAV), and 283 to 302 (TFTV…KALT). Residues 28–310 (VVSTIALVIN…LTSVTSEFQR (283 aa)) form the ABC transmembrane type-1 domain. In terms of domain architecture, ABC transporter spans 342 to 578 (VDVKDVTFTY…DGAYAQLHRI (237 aa)). Residue 376 to 383 (GRSGSGKS) coordinates ATP.

The protein belongs to the ABC transporter superfamily. Lipid exporter (TC 3.A.1.106) family. Homodimer.

Its subcellular location is the cell inner membrane. It catalyses the reaction ATP + H2O + lipid A-core oligosaccharideSide 1 = ADP + phosphate + lipid A-core oligosaccharideSide 2.. Its function is as follows. Involved in lipopolysaccharide (LPS) biosynthesis. Translocates lipid A-core from the inner to the outer leaflet of the inner membrane. Transmembrane domains (TMD) form a pore in the inner membrane and the ATP-binding domain (NBD) is responsible for energy generation. Shows ATPase activity. The protein is ATP-dependent lipid A-core flippase of Vibrio cholerae serotype O1 (strain ATCC 39315 / El Tor Inaba N16961).